The following is an 89-amino-acid chain: Sec-independent protein translocase protein TatA (89 aa).

The helical transmembrane segment at 1–21 (MGGISIWQLLIIALIVVLLFG) threads the bilayer. A compositionally biased stretch (basic and acidic residues) spans 47 to 61 (EEKKALEENATDKPA). Residues 47-89 (EEKKALEENATDKPAADTAKVTETAKVAETAEKKAESKGKEQA) form a disordered region. Positions 62–74 (ADTAKVTETAKVA) are enriched in low complexity. Positions 75-89 (ETAEKKAESKGKEQA) are enriched in basic and acidic residues.

It belongs to the TatA/E family. In terms of assembly, the Tat system comprises two distinct complexes: a TatABC complex, containing multiple copies of TatA, TatB and TatC subunits, and a separate TatA complex, containing only TatA subunits. Substrates initially bind to the TatABC complex, which probably triggers association of the separate TatA complex to form the active translocon.

The protein localises to the cell inner membrane. Its function is as follows. Part of the twin-arginine translocation (Tat) system that transports large folded proteins containing a characteristic twin-arginine motif in their signal peptide across membranes. TatA could form the protein-conducting channel of the Tat system. This is Sec-independent protein translocase protein TatA from Shewanella pealeana (strain ATCC 700345 / ANG-SQ1).